The following is a 787-amino-acid chain: Filamentous growth regulator 27 (787 aa).

The segment at Met-1–Asp-22 is disordered. The segment at residues Cys-31–Cys-57 is a DNA-binding region (zn(2)-C6 fungal-type). Positions Gly-69–Ser-97 form a coiled coil. 2 disordered regions span residues Ser-120–Pro-140 and Arg-200–Ile-221. A compositionally biased stretch (polar residues) spans Asp-209–Ile-221.

It is found in the nucleus. Functionally, transcription factor involved in yeast cell adherence to silicone substrate, filamentous growth, and biofilm formation. This chain is Filamentous growth regulator 27 (FGR27), found in Candida albicans (strain SC5314 / ATCC MYA-2876) (Yeast).